The primary structure comprises 213 residues: Large ribosomal subunit protein uL4 (213 aa).

The interval 41–75 (GTASTKTRAEVSRSGKKMYSQKGTGNARHGDRSVP) is disordered.

It belongs to the universal ribosomal protein uL4 family. As to quaternary structure, part of the 50S ribosomal subunit.

Its function is as follows. One of the primary rRNA binding proteins, this protein initially binds near the 5'-end of the 23S rRNA. It is important during the early stages of 50S assembly. It makes multiple contacts with different domains of the 23S rRNA in the assembled 50S subunit and ribosome. Forms part of the polypeptide exit tunnel. In Deinococcus geothermalis (strain DSM 11300 / CIP 105573 / AG-3a), this protein is Large ribosomal subunit protein uL4.